The sequence spans 55 residues: Ribosome biogenesis protein Nop10 (55 aa).

Belongs to the NOP10 family.

Its function is as follows. Involved in ribosome biogenesis; more specifically in 18S rRNA pseudouridylation and in cleavage of pre-rRNA. The polypeptide is Ribosome biogenesis protein Nop10 (Methanosphaera stadtmanae (strain ATCC 43021 / DSM 3091 / JCM 11832 / MCB-3)).